Reading from the N-terminus, the 101-residue chain is 2-amino-4-ketopentanoate thiolase alpha subunit (101 aa).

Belongs to the OrtA family. In terms of assembly, heterodimer with OrtB.

It carries out the reaction D-alanine + acetyl-CoA = (2R)-2-amino-4-oxopentanoate + CoA. Its activity is regulated as follows. Completely inhibited by p-chloromercuribenzoate (p-ClHgBzO) and acetyl-CoA, and partially inhibited by N-ethylmaleimide. Involved in the ornithine fermentation pathway. Catalyzes the thiolytic cleavage of 2-amino-4-ketopentanoate (AKP) with coenzyme A (CoA) to form acetyl-CoA and alanine. It is strictly specific for AKP. This is 2-amino-4-ketopentanoate thiolase alpha subunit from Acetoanaerobium sticklandii (strain ATCC 12662 / DSM 519 / JCM 1433 / CCUG 9281 / NCIMB 10654 / HF) (Clostridium sticklandii).